A 211-amino-acid polypeptide reads, in one-letter code: Dual specificity protein phosphatase 26 (211 aa).

Residues Asn-60–Gln-207 enclose the Tyrosine-protein phosphatase domain. The active-site Phosphocysteine intermediate is the Cys-152.

It belongs to the protein-tyrosine phosphatase family. Non-receptor class dual specificity subfamily. As to quaternary structure, interacts with HSF4.

Its subcellular location is the cytoplasm. It localises to the nucleus. It is found in the golgi apparatus. The enzyme catalyses O-phospho-L-tyrosyl-[protein] + H2O = L-tyrosyl-[protein] + phosphate. It carries out the reaction O-phospho-L-seryl-[protein] + H2O = L-seryl-[protein] + phosphate. It catalyses the reaction O-phospho-L-threonyl-[protein] + H2O = L-threonyl-[protein] + phosphate. In terms of biological role, inactivates MAPK1 and MAPK3 which leads to dephosphorylation of heat shock factor protein 4 and a reduction in its DNA-binding activity. The protein is Dual specificity protein phosphatase 26 (DUSP26) of Bos taurus (Bovine).